The primary structure comprises 257 residues: Imidazole glycerol phosphate synthase subunit HisF (257 aa).

Catalysis depends on residues D11 and D130.

This sequence belongs to the HisA/HisF family. In terms of assembly, heterodimer of HisH and HisF.

It localises to the cytoplasm. The catalysed reaction is 5-[(5-phospho-1-deoxy-D-ribulos-1-ylimino)methylamino]-1-(5-phospho-beta-D-ribosyl)imidazole-4-carboxamide + L-glutamine = D-erythro-1-(imidazol-4-yl)glycerol 3-phosphate + 5-amino-1-(5-phospho-beta-D-ribosyl)imidazole-4-carboxamide + L-glutamate + H(+). Its pathway is amino-acid biosynthesis; L-histidine biosynthesis; L-histidine from 5-phospho-alpha-D-ribose 1-diphosphate: step 5/9. Functionally, IGPS catalyzes the conversion of PRFAR and glutamine to IGP, AICAR and glutamate. The HisF subunit catalyzes the cyclization activity that produces IGP and AICAR from PRFAR using the ammonia provided by the HisH subunit. In Shewanella halifaxensis (strain HAW-EB4), this protein is Imidazole glycerol phosphate synthase subunit HisF.